Here is a 957-residue protein sequence, read N- to C-terminus: Glycine dehydrogenase (decarboxylating) 2 (957 aa).

Lys-707 carries the N6-(pyridoxal phosphate)lysine modification.

It belongs to the GcvP family. In terms of assembly, the glycine cleavage system is composed of four proteins: P, T, L and H. Requires pyridoxal 5'-phosphate as cofactor.

It catalyses the reaction N(6)-[(R)-lipoyl]-L-lysyl-[glycine-cleavage complex H protein] + glycine + H(+) = N(6)-[(R)-S(8)-aminomethyldihydrolipoyl]-L-lysyl-[glycine-cleavage complex H protein] + CO2. In terms of biological role, the glycine cleavage system catalyzes the degradation of glycine. The P protein binds the alpha-amino group of glycine through its pyridoxal phosphate cofactor; CO(2) is released and the remaining methylamine moiety is then transferred to the lipoamide cofactor of the H protein. In Pseudomonas putida (strain ATCC 47054 / DSM 6125 / CFBP 8728 / NCIMB 11950 / KT2440), this protein is Glycine dehydrogenase (decarboxylating) 2 (gcvP2).